Consider the following 335-residue polypeptide: 2-acylglycerol O-acyltransferase 1 (335 aa).

A run of 2 helical transmembrane segments spans residues 24 to 44 and 104 to 124; these read WLLS…FLII and YIFG…NFCT. N-linked (GlcNAc...) asparagine glycans are attached at residues N125 and N180.

It belongs to the diacylglycerol acyltransferase family.

The protein resides in the endoplasmic reticulum membrane. It catalyses the reaction a 2-acylglycerol + an acyl-CoA = a 1,2-diacylglycerol + CoA. The catalysed reaction is 2-(9Z-octadecenoyl)-glycerol + butanoyl-CoA = 1-butanoyl-2-(9Z-octadecenoyl)-glycerol + CoA. It carries out the reaction 2-(9Z-octadecenoyl)-glycerol + octanoyl-CoA = 1-octanoyl-2-(9Z-octadecenoyl)-glycerol + CoA. The enzyme catalyses 2-(9Z-octadecenoyl)-glycerol + dodecanoyl-CoA = 1-dodecanoyl-2-(9Z-octadecenoyl)-glycerol + CoA. It catalyses the reaction 2-(9Z-octadecenoyl)-glycerol + tetradecanoyl-CoA = 1-tetradecanoyl-2-(9Z-octadecenoyl)-glycerol + CoA. The catalysed reaction is 2-(9Z-octadecenoyl)-glycerol + hexadecanoyl-CoA = 1-hexadecanoyl-2-(9Z-octadecenoyl)-glycerol + CoA. It carries out the reaction 2-(9Z-octadecenoyl)-glycerol + octadecanoyl-CoA = 1-octadecanoyl-2-(9Z-octadecenoyl)-glycerol + CoA. The enzyme catalyses eicosanoyl-CoA + 2-(9Z-octadecenoyl)-glycerol = 1-eicosanoyl-2-(9Z-octadecenoyl)-glycerol + CoA. It catalyses the reaction 2-(9Z-octadecenoyl)-glycerol + (9Z)-octadecenoyl-CoA = 1,2-di-(9Z-octadecenoyl)-glycerol + CoA. The catalysed reaction is 2-(9Z-octadecenoyl)-glycerol + (9Z,12Z)-octadecadienoyl-CoA = 1-(9Z,12Z-octadecadienoyl)-2-(9Z-octadecenoyl)-glycerol + CoA. It carries out the reaction 2-(9Z-octadecenoyl)-glycerol + (5Z,8Z,11Z,14Z)-eicosatetraenoyl-CoA = 1-(5Z,8Z,11Z,14Z-eicosatetraenoyl)-2-(9Z-octadecenoyl)-glycerol + CoA. The enzyme catalyses a 2-acylglycerol + an acyl-CoA = a 1,2-diacyl-sn-glycerol + CoA. It catalyses the reaction a 2-acylglycerol + an acyl-CoA = a 2,3-diacyl-sn-glycerol + CoA. The catalysed reaction is a 1-acylglycerol + an acyl-CoA = a 1,2-diacylglycerol + CoA. It carries out the reaction 1-dodecanoylglycerol + (9Z)-octadecenoyl-CoA = 1-dodecanoyl-2-(9Z-octadecenoyl)-glycerol + CoA. The enzyme catalyses 1-tetradecanoylglycerol + (9Z)-octadecenoyl-CoA = 1-tetradecanoyl-2-(9Z-octadecenoyl)-glycerol + CoA. It catalyses the reaction 1-hexadecanoylglycerol + (9Z)-octadecenoyl-CoA = 1-hexadecanoyl-2-(9Z-octadecenoyl)-glycerol + CoA. The catalysed reaction is 1-(9Z-octadecenoyl)-glycerol + (9Z)-octadecenoyl-CoA = 1,2-di-(9Z-octadecenoyl)-glycerol + CoA. It carries out the reaction 1-(9Z,12Z-octadecadienoyl)-glycerol + (9Z)-octadecenoyl-CoA = 1-(9Z,12Z-octadecadienoyl)-2-(9Z-octadecenoyl)-glycerol + CoA. The enzyme catalyses 1-(9Z,12Z,15Z-octadecatrienoyl)-glycerol + (9Z)-octadecenoyl-CoA = 1-(9Z,12Z,15Z-octadecatrienoyl)-2-(9Z-octadecenoyl)-glycerol + CoA. It catalyses the reaction 1-(5Z,8Z,11Z,14Z-eicosatetraenoyl)-glycerol + (9Z)-octadecenoyl-CoA = 1-(5Z,8Z,11Z,14Z-eicosatetraenoyl)-2-(9Z-octadecenoyl)-glycerol + CoA. The catalysed reaction is a 1-acylglycerol + an acyl-CoA = a 1,3-diacylglycerol + CoA. It carries out the reaction 1-dodecanoylglycerol + (9Z)-octadecenoyl-CoA = 1-dodecanoyl-3-(9Z-octadecenoyl)-glycerol + CoA. The enzyme catalyses 1-hexadecanoylglycerol + (9Z)-octadecenoyl-CoA = 1-(9Z-octadecenoyl)-3-hexadecanoylglycerol + CoA. It catalyses the reaction 1-octadecanoylglycerol + (9Z)-octadecenoyl-CoA = 1-octadecanoyl-3-(9Z-octadecenoyl)-glycerol + CoA. The catalysed reaction is 1-(9Z-octadecenoyl)-sn-glycerol + (9Z)-octadecenoyl-CoA = 1,3-di-(9Z-octadecenoyl)-glycerol + CoA. It carries out the reaction 1-(9Z,12Z-octadecadienoyl)-glycerol + (9Z)-octadecenoyl-CoA = 1-(9Z-octadecenoyl)-3-(9Z,12Z-octadecadienoyl)-glycerol + CoA. The enzyme catalyses 1-(9Z,12Z,15Z-octadecatrienoyl)-glycerol + (9Z)-octadecenoyl-CoA = 1-(9Z,12Z,15Z-octadecatrienoyl)-3-(9Z-octadecenoyl)-glycerol + CoA. It catalyses the reaction a 1-acyl-sn-glycerol + an acyl-CoA = a 1,3-diacyl-sn-glycerol + CoA. The catalysed reaction is a 3-acyl-sn-glycerol + an acyl-CoA = a 1,3-diacyl-sn-glycerol + CoA. It carries out the reaction 3-octadecanoyl-sn-glycerol + (9Z)-octadecenoyl-CoA = 1-(9Z-octadecenoyl)-3-octadecanoyl-sn-glycerol + CoA. The protein operates within glycerolipid metabolism; triacylglycerol biosynthesis. Involved in glycerolipid synthesis and lipid metabolism. Catalyzes the formation of diacylglycerol, the precursor of triacylglycerol, by transferring the acyl chain of a fatty acyl-CoA to a monoacylglycerol, mainly at the sn-1 or sn-3 positions. It uses both sn-2-monoacylglycerol (2-acylglycerol) and sn-1-monoacylglycerol (1-acyl-sn-glycerol) equally well as substrates, and uses sn-3-monoacylglycerol (3-acyl-sn-glycerol) with lower efficiency. Probably not involved in absorption of dietary fat in the small intestine. This Bos taurus (Bovine) protein is 2-acylglycerol O-acyltransferase 1 (MOGAT1).